Consider the following 165-residue polypeptide: Endoribonuclease YbeY (165 aa).

Zn(2+) is bound by residues histidine 130, histidine 134, and histidine 140.

Belongs to the endoribonuclease YbeY family. Zn(2+) serves as cofactor.

The protein resides in the cytoplasm. Functionally, single strand-specific metallo-endoribonuclease involved in late-stage 70S ribosome quality control and in maturation of the 3' terminus of the 16S rRNA. In Streptococcus sanguinis (strain SK36), this protein is Endoribonuclease YbeY.